The primary structure comprises 75 residues: DNA-directed RNA polymerase subunit Rpo6 (75 aa).

The protein belongs to the archaeal Rpo6/eukaryotic RPB6 RNA polymerase subunit family. As to quaternary structure, part of the RNA polymerase complex.

Its subcellular location is the cytoplasm. The catalysed reaction is RNA(n) + a ribonucleoside 5'-triphosphate = RNA(n+1) + diphosphate. DNA-dependent RNA polymerase (RNAP) catalyzes the transcription of DNA into RNA using the four ribonucleoside triphosphates as substrates. This is DNA-directed RNA polymerase subunit Rpo6 from Archaeoglobus fulgidus (strain ATCC 49558 / DSM 4304 / JCM 9628 / NBRC 100126 / VC-16).